Here is a 66-residue protein sequence, read N- to C-terminus: Ocellatin-PT5 (66 aa).

The first 22 residues, 1–22 (MAFLKKSLFLVLFLGLVSLSIC), serve as a signal peptide directing secretion. The propeptide occupies 23-39 (DEEKRQDEDDDDDDDEE). V66 carries the post-translational modification Valine amide.

As to expression, expressed by the skin glands.

It localises to the secreted. Has antibacterial activity against Gram-negative bacterium E.coli ATCC 25922 (MIC=300 uM) but not against S.pneumoniae ATCC 700603, S.choleraesuis ATCC 14028 or Gram-positive bacterium S.aureus ATCC 29313. Shows very little hemolytic activity and no cytotoxicity. This is Ocellatin-PT5 from Leptodactylus pustulatus (Ceara white-lipped frog).